The primary structure comprises 867 residues: DNA endonuclease RBBP8 (867 aa).

Residues 25 to 48 form an essential for binding to the MRN complex and for RPA focus formation on DNA damage region; sequence ELWSKLKECHDKELQELLLKINKL. 2 coiled-coil regions span residues 38-87 and 120-141; these read LQEL…EDRL and ITEL…SEQL. 2 disordered regions span residues 141–171 and 448–486; these read LHNM…PDSP and RYGK…HSML. Acidic residues predominate over residues 154–166; it reads ENPADTGEGEDGV. Positions 489–493 match the PXDLS motif motif; that stretch reads PLDLS. The segment at 508–531 is damage-recruitment motif; the sequence is SSRGRTKQTFALVPEKPDPKKPLH. T817 and T829 each carry phosphothreonine. Residues 843 to 867 are disordered; it reads SPCQRPRRRQPYNAKFSSKIKEQKT.

Belongs to the COM1/SAE2/CtIP family. Homotetramer; formed by antiparallel association of helical extensions protruding from the N-termini of two parallel coiled-coil dimers. Interacts with the MRN complex; the interaction links DNA sensing to resection. Interacts with samhd1. Phosphorylation at Thr-817 and Thr-829 promote interaction with nbn and recruitment to double-strand breaks (DSBs).

The protein resides in the nucleus. It is found in the chromosome. In terms of biological role, endonuclease that cooperates with the MRE11-RAD50-NBN (MRN) complex in DNA-end resection, the first step of double-strand break (DSB) repair through the homologous recombination (HR) pathway. Functions downstream of the MRN complex and ATM, promotes ATR activation and its recruitment to DSBs in the S/G2 phase facilitating the generation of ssDNA. Specifically promotes the endonuclease activity of the MRN complex to clear DNA ends containing protein adducts: recruited to DSBs by nbn following phosphorylation, and promotes the endonuclease of mre11 to clear protein-DNA adducts and generate clean double-strand break ends. The polypeptide is DNA endonuclease RBBP8 (rbbp8) (Xenopus tropicalis (Western clawed frog)).